An 800-amino-acid polypeptide reads, in one-letter code: Ent-copalyl diphosphate synthase 2 (800 aa).

Residues 52–80 (QGQETRERRQLDDDEHARPPQGGDDDVAA) form a disordered region. The segment covering 55–69 (ETRERRQLDDDEHAR) has biased composition (basic and acidic residues). Lys242 contributes to the substrate binding site. Residues Asp374 and Asp376 each coordinate Mg(2+). The DXDD motif motif lies at 374–377 (DIDD). Lys461 contacts substrate.

Belongs to the terpene synthase family. Mg(2+) serves as cofactor.

The enzyme catalyses (2E,6E,10E)-geranylgeranyl diphosphate = ent-copalyl diphosphate. Catalyzes the conversion of geranylgeranyl diphosphate to the phytoalexin precursor ent-copalyl diphosphate. This Oryza sativa subsp. indica (Rice) protein is Ent-copalyl diphosphate synthase 2 (CPS2).